Consider the following 501-residue polypeptide: Leukocyte receptor cluster member 9 (501 aa).

4 disordered regions span residues 1–43, 61–86, 203–234, and 281–300; these read MGSR…PAPP, RQPHPGAPAPPGREAQPEAGAKKPPL, GQEAQAAPKRGSTRPLCTGHQEPGVEEPGELE, and QALGVPGGSAETTEAEWGPA. The C3H1-type zinc-finger motif lies at 40–67; the sequence is PAPPPACRFFLEGRCRFGARCRQPHPGA.

The chain is Leukocyte receptor cluster member 9 (LENG9) from Homo sapiens (Human).